The chain runs to 178 residues: Oligoribonuclease (178 aa).

In terms of domain architecture, Exonuclease spans 7–168 (LIWIDLEMTG…DDIRESIAEL (162 aa)). Y128 is a catalytic residue.

It belongs to the oligoribonuclease family.

Its subcellular location is the cytoplasm. Its function is as follows. 3'-to-5' exoribonuclease specific for small oligoribonucleotides. This chain is Oligoribonuclease, found in Pseudomonas syringae pv. tomato (strain ATCC BAA-871 / DC3000).